Here is a 431-residue protein sequence, read N- to C-terminus: Tol-Pal system protein TolB (431 aa).

The N-terminal stretch at methionine 1–alanine 18 is a signal peptide. Residues leucine 410–glutamine 431 form a disordered region.

This sequence belongs to the TolB family. The Tol-Pal system is composed of five core proteins: the inner membrane proteins TolA, TolQ and TolR, the periplasmic protein TolB and the outer membrane protein Pal. They form a network linking the inner and outer membranes and the peptidoglycan layer.

The protein resides in the periplasm. Functionally, part of the Tol-Pal system, which plays a role in outer membrane invagination during cell division and is important for maintaining outer membrane integrity. The polypeptide is Tol-Pal system protein TolB (Myxococcus xanthus).